The sequence spans 404 residues: MLRAIAEERGRLSLRREVCGLGCFKDDRIVFWTWMFSTYFMEKLAPRQDDMLFYVRRKRAYPGNEGTIDGRKAEAEPEVEVEVYRRDSKKLPGLGDPDIDWEESVCLNLILQKLDYMVTCAVCTRADGGDIHIHRKKSQQVFASPSKHPMDSKGEESKMSYPNIFFMIDSFEEVFSDMTVGEGEMVCVELVASDKTNTFQGVIFQGSIRYEALKKVYDNRVSVAARMAQKMSFGFYKYNNMEFVRMKGPQGKGHAEMAVSRVSTGDTSPCGTEDSSPASPMHERVTSFSTPPTPERNNRPAFFSPSLKRKVPRNRIAEMKKSHSANDSEEFFREDDSGADLHNATNLRSRSLSGTGRSLVGSWLKLNRADGNFLLYAHLTYVTLPLHRILTDILEVRQKPILMT.

The segment covering 262 to 278 (VSTGDTSPCGTEDSSPA) has biased composition (polar residues). Disordered regions lie at residues 262–307 (VSTG…SPSL) and 319–340 (MKKS…SGAD). Phosphoserine is present on residues Ser268, Ser276, and Ser279. Residues Thr290 and Thr293 each carry the phosphothreonine modification. Residues Ser304, Ser306, Ser324, Ser358, and Ser362 each carry the phosphoserine modification. Basic and acidic residues predominate over residues 319-336 (MKKSHSANDSEEFFREDD).

This is an uncharacterized protein from Mus musculus (Mouse).